The chain runs to 295 residues: MSGALDVLQMKEEDVLKFLAAGTHLGGTNLDFQMEQYIYKRKSDGIYIINLKRTWEKLLLAARAIVAIENPADVSVISSRNTGQRAVLKFAAATGATPIAGRFTPGTFTNQIQAAFREPRLLVVTDPRADHQPLTEASYVNLPTIALCNTDSPLRYVDIAIPCNNKGAHSVGLMWWMLAREVLRMRGTISREHPWEVMPDLYFYRDPEEIEKEEQAAAEKAVTKEEFQGEWTAPAPEFTAAQPEVADWSEGVQVPSVPIQQFPTEDWSAQPATEDWSAAPTAQATEWVGATTEWS.

At S2 the chain carries N-acetylserine. Phosphoserine is present on S43. K52 carries the N6-acetyllysine modification. The interaction with PPP1R16B stretch occupies residues 54–113 (TWEKLLLAARAIVAIENPADVSVISSRNTGQRAVLKFAAATGATPIAGRFTPGTFTNQIQ). K89 is subject to N6-acetyllysine; alternate. K89 is covalently cross-linked (Glycyl lysine isopeptide (Lys-Gly) (interchain with G-Cter in SUMO2); alternate). At T97 the chain carries Phosphothreonine. 2 laminin-binding regions span residues 161–180 (IPCNNKGAHSVGLMWWMLAR) and 205–229 (RDPEEIEKEEQAAAEKAVTKEEFQG). 5 [DE]-W-[ST] repeats span residues 230–232 (EWT), 247–249 (DWS), 266–268 (DWS), 275–277 (DWS), and 293–295 (EWS). The laminin-binding stretch occupies residues 242–295 (QPEVADWSEGVQVPSVPIQQFPTEDWSAQPATEDWSAAPTAQATEWVGATTEWS). The disordered stretch occupies residues 266–295 (DWSAQPATEDWSAAPTAQATEWVGATTEWS).

Belongs to the universal ribosomal protein uS2 family. As to quaternary structure, monomer (37LRP) and homodimer (67LR). Component of the small ribosomal subunit. Mature ribosomes consist of a small (40S) and a large (60S) subunit. The 40S subunit contains about 33 different proteins and 1 molecule of RNA (18S). The 60S subunit contains about 49 different proteins and 3 molecules of RNA (28S, 5.8S and 5S). Interacts with RPS21. Interacts with several laminins including at least LAMB1. Interacts with MDK. Interacts with PRNP. The mature dimeric form interacts with PPP1R16B (via its fourth ankyrin repeat). Interacts with PPP1CA only in the presence of PPP1R16B. In terms of processing, acylated. Acylation may be a prerequisite for conversion of the monomeric 37 kDa laminin receptor precursor (37LRP) to the mature dimeric 67 kDa laminin receptor (67LR), and may provide a mechanism for membrane association. Cleaved by stromelysin-3 (ST3) at the cell surface. Cleavage by stromelysin-3 may be a mechanism to alter cell-extracellular matrix interactions.

It localises to the cell membrane. The protein localises to the cytoplasm. Its subcellular location is the nucleus. In terms of biological role, required for the assembly and/or stability of the 40S ribosomal subunit. Required for the processing of the 20S rRNA-precursor to mature 18S rRNA in a late step of the maturation of 40S ribosomal subunits. Also functions as a cell surface receptor for laminin. Plays a role in cell adhesion to the basement membrane and in the consequent activation of signaling transduction pathways. May play a role in cell fate determination and tissue morphogenesis. Also acts as a receptor for several other ligands, including the pathogenic prion protein, viruses, and bacteria. Acts as a PPP1R16B-dependent substrate of PPP1CA. Enables malignant tumor cells to penetrate laminin tissue and vessel barriers. Activates precursor thymic anti-OFA/iLRP specific cytotoxic T-cell. May induce CD8 T-suppressor cells secreting IL-10. The polypeptide is Small ribosomal subunit protein uS2 (Rpsa) (Mus musculus (Mouse)).